A 251-amino-acid chain; its full sequence is MPKRDAPWRSMAGTSKVSRNANYSPRAGMIHKFDKAAAWVNRPMYRKPRIYRTFRSPDVPRGCEGPCKVQSYEQRHDISHVGKVMCISDITRGNGITHRVGKRFCVKSVYILGKIWMDENIKLKNHTNSVMFWLVRDRRPYGTPMEFGQVFNMFDNEPSTATVKNDLRDRYQVMHKFYAKVTGGQYASNEQALVKRFWKVNNYVVYNHQEAGKYENHTENALLLYMACTHASNPVYATLKIRIYFYDSITN.

The Bipartite nuclear localization signal signature appears at 3–20 (KRDAPWRSMAGTSKVSRN). Positions 35–49 (KAAAWVNRPMYRKPR) match the Nuclear localization signal motif. Residues 63–80 (CEGPCKVQSYEQRHDISH) fold into a zinc finger. The Nuclear export signal motif lies at 96-117 (ITHRVGKRFCVKSVYILGKIWM). Positions 195 to 242 (KRFWKVNNYVVYNHQEAGKYENHTENALLLYMACTHASNPVYATLKIR) match the Bipartite nuclear localization signal motif.

Belongs to the geminiviridae capsid protein family. As to quaternary structure, homomultimer. Binds to single-stranded and double-stranded viral DNA. Interacts (via nuclear localization signals) with host importin alpha-1a.

The protein resides in the virion. It is found in the host nucleus. In terms of biological role, encapsidates the viral DNA into characteristic twinned ('geminate') particles. Binds the genomic viral ssDNA and shuttles it into and out of the cell nucleus. The CP of bipartite geminiviruses is not required for cell-to-cell or systemic movement. This is Capsid protein from Cabbage leaf curl virus (isolate Jamaica) (CaLCuV).